The primary structure comprises 246 residues: CTD nuclear envelope phosphatase 1 homolog (246 aa).

The chain crosses the membrane as a helical span at residues Thr-3 to Phe-23. Residues Leu-53 to Leu-220 enclose the FCP1 homology domain.

The protein belongs to the dullard family.

The protein resides in the membrane. The protein localises to the nucleus envelope. It carries out the reaction O-phospho-L-seryl-[protein] + H2O = L-seryl-[protein] + phosphate. It catalyses the reaction O-phospho-L-threonyl-[protein] + H2O = L-threonyl-[protein] + phosphate. Serine/threonine protein phosphatase that may dephosphorylate and activate lipin-like phosphatases. Lipins are phosphatidate phosphatases that catalyze the conversion of phosphatidic acid to diacylglycerol and control the metabolism of fatty acids at different levels. May indirectly modulate the lipid composition of nuclear and/or endoplasmic reticulum membranes and be required for proper nuclear membrane morphology and/or dynamics. Contributes to closure of nuclear envelope (NE) holes and prevents excess nuclear membranes after meiosis and mitosis, possibly through spatial regulation of lipin. May limit the production of endoplasmic reticulum (ER) sheets proximal to the NE to prevent the ER membranes that feed into NE openings from invading the nuclear interior and thereby restrict nuclear transport to nuclear pore complexes (NPCs). May also indirectly regulate the production of lipid droplets and triacylglycerol. The chain is CTD nuclear envelope phosphatase 1 homolog (cnep-1) from Caenorhabditis elegans.